Reading from the N-terminus, the 430-residue chain is Histidine--tRNA ligase (430 aa).

Belongs to the class-II aminoacyl-tRNA synthetase family. In terms of assembly, homodimer.

The protein localises to the cytoplasm. It catalyses the reaction tRNA(His) + L-histidine + ATP = L-histidyl-tRNA(His) + AMP + diphosphate + H(+). This chain is Histidine--tRNA ligase, found in Gloeothece citriformis (strain PCC 7424) (Cyanothece sp. (strain PCC 7424)).